A 77-amino-acid chain; its full sequence is U10-lycotoxin-Ls1d (77 aa).

A signal peptide spans 1-20 (MKLIIFTGLFLFAIVSLIEA). Residues 21–26 (EEESGR) constitute a propeptide that is removed on maturation.

The protein belongs to the neurotoxin 19 (CSTX) family. 09 (U10-Lctx) subfamily. Post-translationally, contains 4 disulfide bonds. As to expression, expressed by the venom gland.

It is found in the secreted. The polypeptide is U10-lycotoxin-Ls1d (Lycosa singoriensis (Wolf spider)).